The following is a 412-amino-acid chain: Imidazolonepropionase (412 aa).

Fe(3+) is bound by residues histidine 71 and histidine 73. Zn(2+) is bound by residues histidine 71 and histidine 73. 4-imidazolone-5-propanoate is bound by residues arginine 80, tyrosine 143, and histidine 176. Residue tyrosine 143 participates in N-formimidoyl-L-glutamate binding. Fe(3+) is bound at residue histidine 241. Residue histidine 241 participates in Zn(2+) binding. Glutamine 244 is a binding site for 4-imidazolone-5-propanoate. Aspartate 316 serves as a coordination point for Fe(3+). Residue aspartate 316 coordinates Zn(2+). N-formimidoyl-L-glutamate is bound by residues asparagine 318 and glycine 320. Residue threonine 321 coordinates 4-imidazolone-5-propanoate.

It belongs to the metallo-dependent hydrolases superfamily. HutI family. The cofactor is Zn(2+). Fe(3+) serves as cofactor.

It localises to the cytoplasm. It carries out the reaction 4-imidazolone-5-propanoate + H2O = N-formimidoyl-L-glutamate. Its pathway is amino-acid degradation; L-histidine degradation into L-glutamate; N-formimidoyl-L-glutamate from L-histidine: step 3/3. Functionally, catalyzes the hydrolytic cleavage of the carbon-nitrogen bond in imidazolone-5-propanoate to yield N-formimidoyl-L-glutamate. It is the third step in the universal histidine degradation pathway. This is Imidazolonepropionase from Aromatoleum aromaticum (strain DSM 19018 / LMG 30748 / EbN1) (Azoarcus sp. (strain EbN1)).